The sequence spans 418 residues: E3 ubiquitin-protein ligase pellino homolog 1 (418 aa).

The 188-residue stretch at 13–200 folds into the FHA; atypical domain; that stretch reads APVKYGELIV…MHPRNGFTED (188 aa). The residue at position 121 (Ser121) is a Phosphoserine; by ATM. Thr127 carries the phosphothreonine; by ATM modification. Residues 311–399 are ring-like domain; necessary for ubiqitination of RIPK3; that stretch reads CGHVHGYHNW…TFHAACPFCA (89 aa).

This sequence belongs to the pellino family. Interacts with MAP3K7. Upon IL1B treatment, forms a complex with TRAF6, IRAK1, IRAK4 and MYD88; this complex recruits MAP3K7/TAK1, TAB1 and TAB2 to mediate NF-kappa-B activation. Direct binding of SMAD6 to PELI1 prevents the complex formation and hence negatively regulates IL1R-TLR signaling and eventually NF-kappa-B-mediated gene expression. Interacts (via atypical FHA domain) with RIPK3; preferentially binds to the 'Thr-182' phosphorylated form of RIPK3. Interacts with RIPK1 and IRAK1. Post-translationally, phosphorylation by IRAK1 and IRAK4 enhances its E3 ligase activity. Phosphorylated by ATM in response to DNA damage, promoting localization to DNA double-strand breaks (DSBs) and ability to mediate 'Lys-63'-linked ubiquitination of NBN. In terms of processing, sumoylated. Expressed at high levels in normal skin but decreased in keratinocytes from toxic epidermal necrolysis (TEN) patients (at protein level).

It localises to the chromosome. It catalyses the reaction S-ubiquitinyl-[E2 ubiquitin-conjugating enzyme]-L-cysteine + [acceptor protein]-L-lysine = [E2 ubiquitin-conjugating enzyme]-L-cysteine + N(6)-ubiquitinyl-[acceptor protein]-L-lysine.. Its pathway is protein modification; protein ubiquitination. E3 ubiquitin ligase catalyzing the covalent attachment of ubiquitin moieties onto substrate proteins. Involved in the TLR and IL-1 signaling pathways via interaction with the complex containing IRAK kinases and TRAF6. Acts as a positive regulator of inflammatory response in microglia through activation of NF-kappa-B and MAP kinase. Mediates 'Lys-63'-linked polyubiquitination of IRAK1 allowing subsequent NF-kappa-B activation. Conjugates 'Lys-63'-linked ubiquitin chains to the adapter protein ASC/PYCARD, which in turn is crucial for NLRP3 inflammasome activation. Mediates 'Lys-48'-linked polyubiquitination of RIPK3 leading to its subsequent proteasome-dependent degradation; preferentially recognizes and mediates the degradation of the 'Thr-182' phosphorylated form of RIPK3. Negatively regulates necroptosis by reducing RIPK3 expression. Mediates 'Lys-63'-linked ubiquitination of RIPK1. Following phosphorylation by ATM, catalyzes 'Lys-63'-linked ubiquitination of NBN, promoting DNA repair via homologous recombination. Negatively regulates activation of the metabolic mTORC1 signaling pathway by mediating 'Lys-63'-linked ubiquitination of mTORC1-inhibitory protein TSC1 and thereby promoting TSC1/TSC2 complex stability. The polypeptide is E3 ubiquitin-protein ligase pellino homolog 1 (Homo sapiens (Human)).